A 128-amino-acid chain; its full sequence is Large ribosomal subunit protein bL20c (128 aa).

It belongs to the bacterial ribosomal protein bL20 family. As to quaternary structure, component of the chloroplast large ribosomal subunit (LSU). Mature 70S chloroplast ribosomes of higher plants consist of a small (30S) and a large (50S) subunit. The 30S small subunit contains 1 molecule of ribosomal RNA (16S rRNA) and 24 different proteins. The 50S large subunit contains 3 rRNA molecules (23S, 5S and 4.5S rRNA) and 33 different proteins.

The protein resides in the plastid. Its subcellular location is the chloroplast. Component of the chloroplast ribosome (chloro-ribosome), a dedicated translation machinery responsible for the synthesis of chloroplast genome-encoded proteins, including proteins of the transcription and translation machinery and components of the photosynthetic apparatus. This is Large ribosomal subunit protein bL20c (rpl20) from Spinacia oleracea (Spinach).